Reading from the N-terminus, the 148-residue chain is Lysozyme C (148 aa).

Positions 1-18 (MKALIILGLVLLSVTVQG) are cleaved as a signal peptide. In terms of domain architecture, C-type lysozyme spans 19–148 (KIFERCELAR…VSQYVEGCGV (130 aa)). Cystine bridges form between Cys24-Cys146, Cys48-Cys134, Cys83-Cys99, and Cys95-Cys113. Active-site residues include Glu53 and Asp71.

This sequence belongs to the glycosyl hydrolase 22 family. As to quaternary structure, monomer.

It carries out the reaction Hydrolysis of (1-&gt;4)-beta-linkages between N-acetylmuramic acid and N-acetyl-D-glucosamine residues in a peptidoglycan and between N-acetyl-D-glucosamine residues in chitodextrins.. Lysozymes have primarily a bacteriolytic function; those in tissues and body fluids are associated with the monocyte-macrophage system and enhance the activity of immunoagents. This is Lysozyme C (LYZ) from Colobus angolensis (Angolan colobus).